The following is a 143-amino-acid chain: uncharacterized protein (143 aa).

The tract at residues 35-59 (ITKDRGDRDDGRYGEPRIQRKPGQL) is disordered. Positions 36 to 52 (TKDRGDRDDGRYGEPRI) are enriched in basic and acidic residues.

This is an uncharacterized protein from Streptomyces fradiae (Streptomyces roseoflavus).